Reading from the N-terminus, the 223-residue chain is MAGFGFRRHGVQPDLASRTWPCTALFSLLFIPVFSKGMHAAQPAVVLASSRGVASFVCEYGSSGNAAEVRVTMLRQAGSQMTEVCAATYTVEDELAFLDDSTCTGTSSGNKVNLTIQGLRAMGTGLYICKVELMYPPPYYVGMGNGTQIYVIDPEPCPDSDFLLWILAAVSSGLFFYSFLITAVSLSKMLKKRSPLTTGVYVKMPPTGPECEKQFQPYFIPIN.

Residues 1–35 (MAGFGFRRHGVQPDLASRTWPCTALFSLLFIPVFS) form the signal peptide. At 36–161 (KGMHAAQPAV…IDPEPCPDSD (126 aa)) the chain is on the extracellular side. An Ig-like V-type domain is found at 39–140 (HAAQPAVVLA…VELMYPPPYY (102 aa)). Residues 46 to 50 (VLASS) form a homodimerization region. 2 disulfides stabilise this stretch: cysteine 58/cysteine 129 and cysteine 85/cysteine 103. Asparagine 113 is a glycosylation site (N-linked (GlcNAc...) asparagine). Residues 134–139 (MYPPPY) are important for interaction with CD80 and CD86. The N-linked (GlcNAc...) asparagine glycan is linked to asparagine 145. The tract at residues 150 to 155 (YVIDPE) is homodimerization. A helical transmembrane segment spans residues 162–182 (FLLWILAAVSSGLFFYSFLIT). The Cytoplasmic segment spans residues 183–223 (AVSLSKMLKKRSPLTTGVYVKMPPTGPECEKQFQPYFIPIN). Position 201 is a phosphotyrosine; by TXK and JAK2 (tyrosine 201).

In terms of assembly, homodimer; disulfide-linked. Binds to CD80/B7-1 and CD86/B7.2. Interacts with ICOSLG. Post-translationally, N-glycosylation is important for dimerization. Phosphorylation at Tyr-201 prevents binding to the AP-2 adapter complex, blocks endocytosis, and leads to retention of CTLA4 on the cell surface.

Its subcellular location is the cell membrane. Functionally, inhibitory receptor acting as a major negative regulator of T-cell responses. The affinity of CTLA4 for its natural B7 family ligands, CD80 and CD86, is considerably stronger than the affinity of their cognate stimulatory coreceptor CD28. The polypeptide is Cytotoxic T-lymphocyte protein 4 (CTLA4) (Canis lupus familiaris (Dog)).